We begin with the raw amino-acid sequence, 148 residues long: Augurin (148 aa).

An N-terminal signal peptide occupies residues Met1–Gly31. 2 consecutive propeptides follow at residues Asn32–Arg70 and Ser133–Tyr148.

It belongs to the augurin family. In terms of tissue distribution, expressed in the intermediate lobe of pituitary, glomerular layer of adrenal cortex, choroid plexus and atrioventricular node of the heart. Expressed in the brain with high expression in the choroid plexus and the epithelial lining of the central canal and expression in the gray matter of the spinal cord (at protein level).

It is found in the secreted. Its subcellular location is the cytoplasm. The protein resides in the apical cell membrane. Its function is as follows. Probable hormone that may attenuate cell proliferation and induce senescence of oligodendrocyte and neural precursor cells in the central nervous system. ECRG4-induced senescence is characterized by G1 arrest, RB1 dephosphorylation and accelerated CCND1 and CCND3 proteasomal degradation. The polypeptide is Augurin (Mus musculus (Mouse)).